We begin with the raw amino-acid sequence, 554 residues long: Neutral amino acid transporter 9 (554 aa).

Topologically, residues 1-112 (MDSDQTPLIN…GSDGTGKNSS (112 aa)) are cytoplasmic. Residues 113–133 (IVTIFMIWNTMMGTSILSIPW) traverse the membrane as a helical segment. The segment at 122–127 (TMMGTS) is important for arginine binding and amino acid transport. Serine 127 is an arginine binding site. Over 134–139 (GIKQAG) the chain is Lumenal. The helical transmembrane segment at 140–160 (FTTGVCILFLMGILTLYCCYR) threads the bilayer. Over 161–191 (VVKSRGTIPLTDTSNWEFPDVCQYYFGSFGR) the chain is Cytoplasmic. The helical transmembrane segment at 192 to 218 (WSSLLFSLVSLIGAMIVYWVLMSNFLF) threads the bilayer. Residues 219–276 (NTGKFIYNYVNDVNVTDDVLSNNGSDKVICPNPDSTRPLNKSMDTYFGNGTNYEQFET) are Lumenal-facing. Residues asparagine 232, asparagine 241, asparagine 258, and asparagine 267 are each glycosylated (N-linked (GlcNAc...) asparagine). A disulfide bond links cysteine 248 and cysteine 417. Residues 277–293 (WWSKTNTVPFYLVVLLL) form a helical membrane-spanning segment. The Cytoplasmic portion of the chain corresponds to 294–302 (PLLSFRSPS). The chain crosses the membrane as a helical span at residues 303-327 (FFAKFNILGTVSIIYLVSLVTLKAA). Residues 328-349 (HLGFHLRFSWNQVQEFFVPEFR) are Lumenal-facing. The helical transmembrane segment at 350–370 (LSFPQLTGILTLAFFIHNCII) threads the bilayer. Residues 371–387 (TLLKNNRNQKNNVRDLS) are Cytoplasmic-facing. A helical membrane pass occupies residues 388-408 (IAYLLVGLTYIYVGVAVFASF). Topologically, residues 409–430 (PSPPLSKQCIQQNFLDNFPSSD) are lumenal. Residues 431 to 451 (ILAFVARIFLLFQMMTVYPLL) traverse the membrane as a helical segment. Positions 437–447 (RIFLLFQMMTV) match the CARC motif motif. The CRAC motif motif lies at 450–456 (LLGYLVR). Residues 452-472 (GYLVRVQLLGHIFGDIYPSVF) lie on the Cytoplasmic side of the membrane. Residues 473 to 493 (HVLALNIAVVGVGVIMARFYP) form a helical membrane-spanning segment. The Lumenal portion of the chain corresponds to 494–500 (NIGGIIR). A helical transmembrane segment spans residues 501-521 (FSGAACGLAFVFVYPSLIHMI). The Cytoplasmic portion of the chain corresponds to 522-533 (SLHRRGQLKVHS). A helical transmembrane segment spans residues 534–554 (ILIHVSIIVLGIANLIAQFFM).

The protein belongs to the amino acid/polyamine transporter 2 family. SLC38A9 subfamily. Associated component of the Ragulator complex. Associated component of the Rag GTPases heterodimers. Glycosylated.

It localises to the lysosome membrane. The protein resides in the late endosome membrane. The catalysed reaction is L-leucine(in) = L-leucine(out). The enzyme catalyses L-tyrosine(in) = L-tyrosine(out). It catalyses the reaction L-glutamine(out) = L-glutamine(in). It carries out the reaction L-asparagine(out) = L-asparagine(in). Lysosomal amino acid transporter involved in the activation of mTORC1 in response to amino acid levels. Probably acts as an amino acid sensor of the Rag GTPases and Ragulator complexes, 2 complexes involved in amino acid sensing and activation of mTORC1, a signaling complex promoting cell growth in response to growth factors, energy levels, and amino acids. Following activation by amino acids, the Ragulator and Rag GTPases function as a scaffold recruiting mTORC1 to lysosomes where it is in turn activated. SLC38A9 mediates transport of amino acids with low capacity and specificity with a slight preference for polar amino acids. Acts as an arginine sensor. Following activation by arginine binding, mediates transport of L-glutamine, leucine and tyrosine with high efficiency, and is required for the efficient utilization of these amino acids after lysosomal protein degradation. However, the transport mechanism is not well defined and the role of sodium is not clear. Guanine exchange factor (GEF) that, upon arginine binding, stimulates GDP release from RRAGA and therefore activates the Rag GTPase heterodimer and the mTORC1 pathway in response to nutrient sufficiency. The sequence is that of Neutral amino acid transporter 9 from Xenopus tropicalis (Western clawed frog).